The sequence spans 1163 residues: MLLKKKRYMFDERDDNNINSPVAVEPSSNNNKMADTREVRIEEQLKVKIGEAKNLSSRNAANTSCSTQGTRDVYCTIALDQEEICRTPTIERTLTPFFGEEHQFKIPRRFRYLTIYLWDRDMKQDKPIGKIAIKREELHMYNHKDHWFSLRPVDQDSEVQGMVNVEVAFTEAQQTQSLSEGIDLGQHTLRHHQNLPHHSHQQRAHLNDYKENSELSNIQRASAAAASSSSAAMTLKTRAAGLFGHVHHPPSQTQHFPIINTTSTSSDQLSNWKSHGRFVGVTIKVPACVDLAKKQGTCDPFVVCTAHYSNKHQVTRRTKQRKKTVDPEFDEAMYFDLHIDADAGSTNTTGSNKSAGSLESSANKGYSIYPVGGADLVEIVVSVWHDAHGAMSDKVFLGEVRLPMLNKQEQQAVNPSAWYYLQPRSMTHSSRSLNATPRSCATPPGTRLSVDSTIGSLRLNLNYTADHVFPLATYDDLMNLLLESVDQRPITVSAVSILGELVSGKTEVAQPLVRLFTHTERIAPIIKALADHEISHLTDPTTIFRGNTLVSKMMDEAMRLSGLHYLHQTLRPVLSQIVAEKKPCEIDPSKIKDRSAVDTNLHNLQDYVERVFEAITKSADRCPKVLCQIFHDLRECAGEHFPSNREVRYSVVSGFIFLRFFAPAILGPKLFDLTTERLDAQTSRTLTLISKTIQSLGNLVSSRSSQQTCKEEFTVELYKKFCTEQHVDAVKHFLEVISTPSHASSSVHPAAAAATPLEPVLLKEGLMTKYPTSRKRFGRQFKQRHFRLTTHSLSYAKSKGKQPICDIPLQEIASVEQLKDKSFKMQNCFKIVHNDRSLIVQTTNCVEEREWFDLLHKICLMNSIRMQYFHPSAFVSGFYSCCGRSDENSPGCKKVLDKTMDYFQMDLVTALDPALDLQRIHTLIMSNMSVLESLLDPLTYHQSLSQTQHQQHNPLVPLATDLQKHSPQAFAEFKRTIEKLREKAYAIDRDHRDYKQGITRQLKYGSRQAPIGDDNYWHMMRAAGQLNQQHHQQQQHQQQQQQQQQQQLQQFQPQPVLPQMQNVRAYPYQPATSNMNAYCLHNMQYQQQRLPFHQQQQQHHQQLQQQQSQFQPLRSHQLQRHNNNLNNNNCGNGSSSSPSSTTSSVVAAPPSTTSSSQPAPPIY.

C2 domains lie at 26–148 (PSSN…DHWF) and 261–419 (TTST…SAWY). A Ras-GAP domain is found at 520-737 (ERIAPIIKAL…DAVKHFLEVI (218 aa)). The region spanning 762–860 (LKEGLMTKYP…WFDLLHKICL (99 aa)) is the PH domain. A Btk-type zinc finger spans residues 862–898 (NSIRMQYFHPSAFVSGFYSCCGRSDENSPGCKKVLDK). Zn(2+) is bound by residues His870, Cys881, Cys882, and Cys892. 2 disordered regions span residues 1026–1051 (LNQQ…LQQF) and 1091–1163 (PFHQ…PPIY). Over residues 1091–1157 (PFHQQQQQHH…APPSTTSSSQ (67 aa)) the composition is skewed to low complexity.

In terms of assembly, interacts with sty. In third instar larvae eye imaginal disk, expressed in cells posterior to the morphogenetic furrow, in all photoreceptor and cone cell precursors as well as in still uncommitted cells.

In terms of biological role, inhibitory regulator of the Ras-cyclic AMP pathway. May function as a negative regulator of Ras85D/Ras1 in the sev signaling pathway. Acts cell autonomously in cone cell precursors as a negative regulator of R7 photoreceptor cell determination. The protein is GTPase-activating protein (RasGAP1) of Drosophila melanogaster (Fruit fly).